The primary structure comprises 299 residues: Probable lipid kinase YegS (299 aa).

The 132-residue stretch at 2–133 (AEFPASLLIL…IDMAQVNKQT (132 aa)) folds into the DAGKc domain. Residues Thr-40, 66–72 (GDGTINE), and Thr-95 each bind ATP. 3 residues coordinate Mg(2+): Leu-215, Asp-218, and Leu-220. Glu-271 serves as the catalytic Proton acceptor.

It belongs to the diacylglycerol/lipid kinase family. YegS lipid kinase subfamily. Mg(2+) is required as a cofactor. The cofactor is Ca(2+).

It is found in the cytoplasm. Functionally, probably phosphorylates lipids; the in vivo substrate is unknown. The polypeptide is Probable lipid kinase YegS (Escherichia coli O9:H4 (strain HS)).